The following is a 351-amino-acid chain: Tropomodulin-2 (351 aa).

S25 carries the phosphoserine modification.

It belongs to the tropomodulin family. Binds to the N-terminus of tropomyosin and to actin. As to expression, neuronal-tissue specific.

The protein resides in the cytoplasm. It localises to the cytoskeleton. Blocks the elongation and depolymerization of the actin filaments at the pointed end. The Tmod/TM complex contributes to the formation of the short actin protofilament, which in turn defines the geometry of the membrane skeleton. The chain is Tropomodulin-2 (Tmod2) from Mus musculus (Mouse).